A 151-amino-acid chain; its full sequence is Ribosome maturation factor RimP (151 aa).

Belongs to the RimP family.

The protein resides in the cytoplasm. Its function is as follows. Required for maturation of 30S ribosomal subunits. In Vibrio atlanticus (strain LGP32) (Vibrio splendidus (strain Mel32)), this protein is Ribosome maturation factor RimP.